The chain runs to 204 residues: Synaptosomal-associated protein 25-A (204 aa).

The segment covering 1 to 11 (MAEDSDMRNEL) has biased composition (basic and acidic residues). Residues 1–25 (MAEDSDMRNELADMQQRADQLADES) are disordered. T-SNARE coiled-coil homology domains lie at 19–81 (DQLA…LNDL) and 138–200 (DARE…ATKM).

The protein belongs to the SNAP-25 family. As to expression, expressed in several regions throughout the adult brain, including the mesencephalon.

It localises to the synapse. The protein resides in the synaptosome. The protein localises to the cell membrane. Its function is as follows. May play an important role in the synaptic function of specific neuronal systems. Associates with proteins involved in vesicle docking and membrane fusion. In Danio rerio (Zebrafish), this protein is Synaptosomal-associated protein 25-A.